The following is a 395-amino-acid chain: 1-deoxy-D-xylulose 5-phosphate reductoisomerase (395 aa).

Positions 10, 11, 12, 13, 36, and 123 each coordinate NADPH. Lys124 serves as a coordination point for 1-deoxy-D-xylulose 5-phosphate. Glu125 contacts NADPH. Asp149 contributes to the Mn(2+) binding site. 1-deoxy-D-xylulose 5-phosphate contacts are provided by Ser150, Glu151, Ser185, and His208. Mn(2+) is bound at residue Glu151. Gly214 lines the NADPH pocket. 1-deoxy-D-xylulose 5-phosphate contacts are provided by Ser221, Asn226, Lys227, and Glu230. Position 230 (Glu230) interacts with Mn(2+).

Belongs to the DXR family. Mg(2+) is required as a cofactor. It depends on Mn(2+) as a cofactor.

The catalysed reaction is 2-C-methyl-D-erythritol 4-phosphate + NADP(+) = 1-deoxy-D-xylulose 5-phosphate + NADPH + H(+). The protein operates within isoprenoid biosynthesis; isopentenyl diphosphate biosynthesis via DXP pathway; isopentenyl diphosphate from 1-deoxy-D-xylulose 5-phosphate: step 1/6. Its function is as follows. Catalyzes the NADPH-dependent rearrangement and reduction of 1-deoxy-D-xylulose-5-phosphate (DXP) to 2-C-methyl-D-erythritol 4-phosphate (MEP). This is 1-deoxy-D-xylulose 5-phosphate reductoisomerase from Shewanella amazonensis (strain ATCC BAA-1098 / SB2B).